Reading from the N-terminus, the 463-residue chain is Argininosuccinate lyase (463 aa).

Belongs to the lyase 1 family. Argininosuccinate lyase subfamily.

It localises to the cytoplasm. The catalysed reaction is 2-(N(omega)-L-arginino)succinate = fumarate + L-arginine. The protein operates within amino-acid biosynthesis; L-arginine biosynthesis; L-arginine from L-ornithine and carbamoyl phosphate: step 3/3. In Bradyrhizobium sp. (strain BTAi1 / ATCC BAA-1182), this protein is Argininosuccinate lyase.